The sequence spans 429 residues: Zinc finger protein 385C (429 aa).

The segment at 77–107 adopts a Matrin-type 1 zinc-finger fold; the sequence is ISCNICHLRFNSANQAEAHYKGHRHARKLKA. Disordered regions lie at residues 109-224, 258-295, and 311-340; these read EAAK…GRGE, GHQG…GPSP, and QLKQ…NKLQ. The segment covering 125–146 has biased composition (low complexity); that stretch reads TVVSSASPPASGSPGTPQSKGP. Over residues 147–162 the composition is skewed to pro residues; the sequence is ASPPLGPSLQLPPTPD. The span at 181 to 193 shows a compositional bias: low complexity; sequence CDAAASSSSSSCP. The Matrin-type 2 zinc-finger motif lies at 225–259; sequence KGRLYCPTCKVTVNSASQLQAHNTGAKHRWMVEGH. Residues 262–284 are compositionally biased toward basic residues; sequence APRRGRGRPVSRGGTGHKTKRVI. The Matrin-type 3 zinc-finger motif lies at 297–327; it reads FHCALCQLHVNSETQLKQHMSSRRHKDRLAG.

The protein localises to the nucleus. This is Zinc finger protein 385C from Mus musculus (Mouse).